Consider the following 131-residue polypeptide: MRKTKVINTQISSVISDMGHFDTLSIGDAGMPVPVGTKKIDVAIENGVPSFIQVLTNILSELEVQKVYLANEIKTANPEQLAAIKALIGETPIEFIDHSQMKQDLNKAKAFVRTGEMTPYSNIILESGVVF.

His20 (proton donor) is an active-site residue. Residues Asp28, His98, and 120 to 122 contribute to the substrate site; that span reads YSN.

Belongs to the RbsD / FucU family. RbsD subfamily. Homodecamer.

The protein resides in the cytoplasm. It carries out the reaction beta-D-ribopyranose = beta-D-ribofuranose. The protein operates within carbohydrate metabolism; D-ribose degradation; D-ribose 5-phosphate from beta-D-ribopyranose: step 1/2. In terms of biological role, catalyzes the interconversion of beta-pyran and beta-furan forms of D-ribose. The chain is D-ribose pyranase from Latilactobacillus sakei subsp. sakei (strain 23K) (Lactobacillus sakei subsp. sakei).